The chain runs to 532 residues: 2,3-bisphosphoglycerate-independent phosphoglycerate mutase (532 aa).

The Mn(2+) site is built by aspartate 15 and serine 65. Serine 65 functions as the Phosphoserine intermediate in the catalytic mechanism. Substrate contacts are provided by residues histidine 126, 156–157, arginine 188, arginine 194, 258–261, and lysine 331; these read RD and RPDR. Residues aspartate 398, histidine 402, aspartate 439, histidine 440, and histidine 457 each coordinate Mn(2+).

Belongs to the BPG-independent phosphoglycerate mutase family. As to quaternary structure, monomer. Mn(2+) is required as a cofactor.

It catalyses the reaction (2R)-2-phosphoglycerate = (2R)-3-phosphoglycerate. Its pathway is carbohydrate degradation; glycolysis; pyruvate from D-glyceraldehyde 3-phosphate: step 3/5. Functionally, catalyzes the interconversion of 2-phosphoglycerate and 3-phosphoglycerate. The protein is 2,3-bisphosphoglycerate-independent phosphoglycerate mutase of Synechocystis sp. (strain ATCC 27184 / PCC 6803 / Kazusa).